The following is a 580-amino-acid chain: Transcription factor coe2-B (580 aa).

The interaction with DNA stretch occupies residues 60–63; it reads RKSN. The C5-type zinc finger occupies 148–167; the sequence is CRVLLTHEVMCSRCCEKKSC. 2 interaction with DNA regions span residues 194–201 and 233–236; these read NCLKTAGN and NNSK. One can recognise an IPT/TIG domain in the interval 259-341; that stretch reads PCIKAISPSE…CKGAPGRFIY (83 aa). A disordered region spans residues 455–492; it reads IRNTSSISPRGYSSSSTPQQSNYSTPSNSMNGYSNVPM. Residues 459-481 are compositionally biased toward low complexity; sequence SSISPRGYSSSSTPQQSNYSTPS. Polar residues predominate over residues 482–492; the sequence is NSMNGYSNVPM.

Belongs to the COE family. In embryos, expressed in precursors of primary neurons. In adults, expressed at high levels in the brain, and at low levels in the somatic muscles, testis, and possibly the spleen.

It is found in the nucleus. May play a pivotal role in the transcriptional cascade that specifies primary neurons in embryos. Stabilizes the higher neural potential of selected progenitor cells that express neurog2/X-ngnr-1 by maintaining Delta-Notch signaling. Thus ensures the transition between neural competence and irreversible commitment to a neural fate. Also promotes neuronal differentiation by activating neurod1 expression, directly or indirectly. The chain is Transcription factor coe2-B from Xenopus laevis (African clawed frog).